Consider the following 190-residue polypeptide: UPF0340 protein BCE33L5016 (190 aa).

It belongs to the UPF0340 family.

The chain is UPF0340 protein BCE33L5016 from Bacillus cereus (strain ZK / E33L).